The primary structure comprises 277 residues: Glycerol-3-phosphate acyltransferase (277 aa).

Helical transmembrane passes span 3-23 (LFIF…AIIV), 55-75 (IMVM…AKFL), 79-99 (PVTV…PVFF), 111-131 (IGAL…TWLL), and 155-175 (LILV…ILVL). The segment at 207 to 277 (SPATSAEQEF…PKTKTVKEKE (71 aa)) is disordered. Residues 216–239 (FPGKEVIDTNIDETEKTEQAEAVK) show a composition bias toward basic and acidic residues. Composition is skewed to basic residues over residues 240-253 (KPKV…AKKT) and 262-271 (KPKSTKPKTK).

This sequence belongs to the PlsY family. In terms of assembly, probably interacts with PlsX.

The protein resides in the cell inner membrane. It carries out the reaction an acyl phosphate + sn-glycerol 3-phosphate = a 1-acyl-sn-glycero-3-phosphate + phosphate. The protein operates within lipid metabolism; phospholipid metabolism. Catalyzes the transfer of an acyl group from acyl-phosphate (acyl-PO(4)) to glycerol-3-phosphate (G3P) to form lysophosphatidic acid (LPA). This enzyme utilizes acyl-phosphate as fatty acyl donor, but not acyl-CoA or acyl-ACP. The protein is Glycerol-3-phosphate acyltransferase of Legionella pneumophila subsp. pneumophila (strain Philadelphia 1 / ATCC 33152 / DSM 7513).